The chain runs to 1356 residues: Partitioning defective 3 homolog (1356 aa).

S25 is modified (phosphoserine). 2 disordered regions span residues 81–100 (EQDP…GTQS) and 154–262 (SVSD…GLEH). At T91 the chain carries Phosphothreonine. Over residues 91 to 100 (TSASSTGTQS) the composition is skewed to low complexity. Composition is skewed to polar residues over residues 154–163 (SVSDSNFSSE) and 171–187 (TRWS…TAGS). S156 and S174 each carry phosphoserine. A compositionally biased stretch (basic and acidic residues) spans 190 to 203 (TCDRKKDENYRSLP). The segment covering 204-224 (RDTSNWSNQFQRDNARSSLSA) has biased composition (polar residues). Residues 246 to 260 (DNSRVEPVGHADTGL) are compositionally biased toward basic and acidic residues. A PDZ 1 domain is found at 271 to 359 (MVKLVEVPND…TPIIWFHVVP (89 aa)). The residue at position 383 (S383) is a Phosphoserine. Residues 408-448 (LNHPPEQIDSHSRLPHSAHPSGKPPSAPASAPQNVFSTTVS) form a disordered region. 2 consecutive PDZ domains span residues 461 to 546 (NIQL…LVFR) and 590 to 677 (EVPL…GMIQ). A Phosphotyrosine modification is found at Y489. S692, S695, S715, S728, A792, S809, and S827 each carry phosphoserine. Positions 712 to 936 (RRISHSLYSG…AAIDKSYDKP (225 aa)) are interaction with PRKCI and PRKCZ. Residue K834 is modified to N6-acetyllysine. Residue S837 is modified to Phosphoserine. K851 is subject to N6-acetyllysine. Residues S852 and S873 each carry the phosphoserine modification. Disordered stretches follow at residues 865-886 (TVDD…GLKK) and 932-1025 (SYDK…DMFR). K885 is modified (N6-acetyllysine). The segment at 935-1356 (KPAVDDDDEG…TPEKGRPFYS (422 aa)) is interaction with FRMD4A. Positions 939 to 953 (DDDDEGMETLEEDTE) are enriched in acidic residues. The residue at position 962 (S962) is a Phosphoserine; by AURKA. Over residues 968–982 (DQPSHSLERQMNGNQ) the composition is skewed to polar residues. Residues S971 and S973 each carry the phosphoserine modification. The segment covering 983–1009 (EKGDKTDRKKDKTGKEKKKDRDKEKDK) has biased composition (basic and acidic residues). S1046 bears the Phosphoserine mark. Positions 1049–1077 (SEEERIRMKQEQERIQAKTREFRERQARE) form a coiled coil. The disordered stretch occupies residues 1129 to 1356 (QVKKPRNSKP…TPEKGRPFYS (228 aa)). Positions 1136 to 1149 (SKPSPVDSNRSTPS) are enriched in polar residues. Basic and acidic residues predominate over residues 1150-1177 (NHDRIQRLRQEFQQAKQDEDVEDRRRTY). Coiled-coil stretches lie at residues 1151–1174 (HDRI…EDRR), 1201–1224 (VQMQ…YSSL), and 1280–1301 (MLET…MKKQ). Residues 1196–1205 (SVSVEVQMQR) are compositionally biased toward low complexity. The span at 1221-1245 (YSSLPRQSRKNASSVSQDSWEQNYS) shows a compositional bias: polar residues. Residues 1285–1298 (ELLRQEQRRKEQQM) show a composition bias toward basic and acidic residues. The segment covering 1337 to 1346 (SQVARLNRLQ) has biased composition (polar residues). Over residues 1347-1356 (TPEKGRPFYS) the composition is skewed to basic and acidic residues. K1350 carries the post-translational modification N6-acetyllysine.

Belongs to the PAR3 family. Interacts (via PDZ 1 domain) with F11R/JAM1, PARD6A and PARD6B. Interacts with PRCKI and CDH5. Interacts (via PDZ 3 domain) with PTEN (via C-terminus). Part of a complex with PARD6A or PARD6B, PRKCI or PRKCZ and CDC42 or RAC1. Component of a complex whose core is composed of ARHGAP17, AMOT, PALS1, PATJ and PARD3/PAR3. Interacts with LIMK2, AURKA and AURKB. Component of the Par polarity complex, composed of at least phosphorylated PRKCZ, PARD3 and TIAM1. Directly interacts with TIAM1 and TIAM2. Interacts with ECT2, FBF1 and SIRT2. Interacts (via coiled-coil domain) with FRMD4A. Found in a complex with PARD3, CYTH1 and FRMD4A. Interacts with SAPCD2. Interacts with PRKCA. In terms of assembly, interacts with PRKCZ. Post-translationally, acetylated. Deacetylated by SIRT2, thereby inhibiting Schwann cell peripheral myelination. In terms of processing, phosphorylation at Ser-827 by PRKCZ and PRKCI occurs at the most apical tip of epithelial cell-cell contacts during the initial phase of tight junction formation and may promote dissociation of the complex with PARD6. EGF-induced Tyr-1127 phosphorylation mediates dissociation from LIMK2. Phosphorylation by AURKA at Ser-962 is required for the normal establishment of neuronal polarity. Widely expressed.

It is found in the cytoplasm. Its subcellular location is the endomembrane system. The protein resides in the cell junction. The protein localises to the tight junction. It localises to the adherens junction. It is found in the cell membrane. Its subcellular location is the cell cortex. The protein resides in the cytoskeleton. Functionally, adapter protein involved in asymmetrical cell division and cell polarization processes. Seems to play a central role in the formation of epithelial tight junctions. Targets the phosphatase PTEN to cell junctions. Involved in Schwann cell peripheral myelination. Association with PARD6B may prevent the interaction of PARD3 with F11R/JAM1, thereby preventing tight junction assembly. The PARD6-PARD3 complex links GTP-bound Rho small GTPases to atypical protein kinase C proteins. Required for establishment of neuronal polarity and normal axon formation in cultured hippocampal neurons. The protein is Partitioning defective 3 homolog of Homo sapiens (Human).